We begin with the raw amino-acid sequence, 412 residues long: Multifunctional CCA protein (412 aa).

ATP contacts are provided by glycine 8 and arginine 11. Residues glycine 8 and arginine 11 each contribute to the CTP site. Mg(2+)-binding residues include aspartate 21 and aspartate 23. ATP is bound by residues arginine 91, arginine 137, and arginine 140. The CTP site is built by arginine 91, arginine 137, and arginine 140. The HD domain occupies 228 to 329; sequence TGIHTLMTLS…VKLFDSIDAW (102 aa).

This sequence belongs to the tRNA nucleotidyltransferase/poly(A) polymerase family. Bacterial CCA-adding enzyme type 1 subfamily. In terms of assembly, monomer. Can also form homodimers and oligomers. Requires Mg(2+) as cofactor. Ni(2+) serves as cofactor.

The catalysed reaction is a tRNA precursor + 2 CTP + ATP = a tRNA with a 3' CCA end + 3 diphosphate. It catalyses the reaction a tRNA with a 3' CCA end + 2 CTP + ATP = a tRNA with a 3' CCACCA end + 3 diphosphate. Functionally, catalyzes the addition and repair of the essential 3'-terminal CCA sequence in tRNAs without using a nucleic acid template. Adds these three nucleotides in the order of C, C, and A to the tRNA nucleotide-73, using CTP and ATP as substrates and producing inorganic pyrophosphate. tRNA 3'-terminal CCA addition is required both for tRNA processing and repair. Also involved in tRNA surveillance by mediating tandem CCA addition to generate a CCACCA at the 3' terminus of unstable tRNAs. While stable tRNAs receive only 3'-terminal CCA, unstable tRNAs are marked with CCACCA and rapidly degraded. The sequence is that of Multifunctional CCA protein from Escherichia coli O157:H7.